The primary structure comprises 479 residues: Ubiquinone biosynthesis monooxygenase COQ6, mitochondrial (479 aa).

Residues 1-17 (MFFSKVMLTRRILVRGL) constitute a mitochondrion transit peptide.

The protein belongs to the UbiH/COQ6 family. Component of a multi-subunit COQ enzyme complex, composed of at least COQ3, COQ4, COQ5, COQ6, COQ7 and COQ9. Requires FAD as cofactor.

It localises to the mitochondrion inner membrane. The enzyme catalyses 4-hydroxy-3-(all-trans-hexaprenyl)benzoate + 2 reduced [2Fe-2S]-[ferredoxin] + O2 + 2 H(+) = 3,4-dihydroxy-5-(all-trans-hexaprenyl)benzoate + 2 oxidized [2Fe-2S]-[ferredoxin] + H2O. The catalysed reaction is 2-methoxy-6-(all-trans-hexaprenyl)phenol + 2 reduced [2Fe-2S]-[ferredoxin] + O2 + 2 H(+) = 2-methoxy-6-(all-trans-hexaprenyl)benzene-1,4-diol + 2 oxidized [2Fe-2S]-[ferredoxin] + H2O. It catalyses the reaction 4-amino-3-(all-trans-hexaprenyl)benzoate + 2 reduced [2Fe-2S]-[ferredoxin] + O2 + 2 H(+) = 4-amino-5-hydroxy-3-(all-trans-hexaprenyl)benzoate + 2 oxidized [2Fe-2S]-[ferredoxin] + H2O. It carries out the reaction 4-amino-5-hydroxy-3-(all-trans-hexaprenyl)benzoate + 4 reduced [2Fe-2S]-[ferredoxin] + O2 + 5 H(+) = 3,4-dihydroxy-5-(all-trans-hexaprenyl)benzoate + 4 oxidized [2Fe-2S]-[ferredoxin] + NH4(+) + H2O. It functions in the pathway cofactor biosynthesis; ubiquinone biosynthesis. Functionally, FAD-dependent monooxygenase required for two non-consecutive steps during ubiquinone biosynthesis. Required for the C5-ring hydroxylation during ubiquinone biosynthesis by catalyzing the hydroxylation of 4-hydroxy-3-(all-trans-hexaprenyl)benzoic acid to 3,4-dihydroxy-5-(all-trans-hexaprenyl)benzoic acid. Also acts downstream of COQ4, for the C1-hydroxylation during ubiquinone biosynthesis by catalyzing the hydroxylation of 2-methoxy-6-(all-trans-hexaprenyl)phenol to 2-methoxy-6-(all-trans-hexaprenyl)benzene-1,4-diol. The electrons required for the hydroxylation reaction are funneled indirectly from NADPH via ferredoxin (YAH1) and ferredoxin reductase (ARH1) to COQ6. Can also convert 3-hexaprenyl-4-aminobenzoic acid (HAB), a COQ2-prenylated pABA, to DHHB in a two step process. HAB is first hydroxylated at C5 to yield 3-hexaprenyl-4-amino-5-hydroxybenzoic acid (HHAB) which is further deaminated at C4 by COQ6 to produce DHHB. The sequence is that of Ubiquinone biosynthesis monooxygenase COQ6, mitochondrial from Saccharomyces cerevisiae (strain ATCC 204508 / S288c) (Baker's yeast).